Consider the following 923-residue polypeptide: SPX and EXS domain-containing protein 1 (923 aa).

Positions methionine 1–glutamine 326 constitute an SPX domain. Low complexity-rich tracts occupy residues glutamine 94–glutamine 147 and threonine 186–threonine 195. Disordered regions lie at residues glutamine 94–lysine 150 and proline 185–lysine 208. 9 consecutive transmembrane segments (helical) span residues leucine 382–phenylalanine 402, phenylalanine 416–tryptophan 436, alanine 471–glycine 491, proline 499–phenylalanine 519, leucine 529–phenylalanine 551, serine 591–leucine 611, isoleucine 620–leucine 640, isoleucine 655–valine 675, and tryptophan 700–isoleucine 720. The region spanning arginine 585–proline 785 is the EXS domain. Positions serine 793–serine 871 are disordered.

This sequence belongs to the SYG1 (TC 2.A.94) family.

The protein localises to the membrane. In Dictyostelium discoideum (Social amoeba), this protein is SPX and EXS domain-containing protein 1.